Consider the following 316-residue polypeptide: Glutathione synthetase (316 aa).

Residues 124 to 311 (NEKLAALLFP…IAGLLFDAIE (188 aa)) enclose the ATP-grasp domain. ATP is bound at residue 151-208 (FVLAHGQAVLKPLDGMGGRSIFRSGTGDPNLNVILETLTDGGRKLTLAQRFIPDITAG). Residues E282 and N284 each contribute to the Mg(2+) site.

The protein belongs to the prokaryotic GSH synthase family. Mg(2+) is required as a cofactor. Requires Mn(2+) as cofactor.

The enzyme catalyses gamma-L-glutamyl-L-cysteine + glycine + ATP = glutathione + ADP + phosphate + H(+). It functions in the pathway sulfur metabolism; glutathione biosynthesis; glutathione from L-cysteine and L-glutamate: step 2/2. The sequence is that of Glutathione synthetase from Xanthomonas campestris pv. campestris (strain ATCC 33913 / DSM 3586 / NCPPB 528 / LMG 568 / P 25).